Consider the following 206-residue polypeptide: Reticulon-like protein B13 (206 aa).

One can recognise a Reticulon domain in the interval 16–206; sequence VEDIYLWRRK…GTEEKVKKSE (191 aa). 3 helical membrane passes run 27–47, 50–70, and 134–154; these read LAFS…FYGF, ITIV…WGSL, and IGNL…GLTV.

The protein localises to the endoplasmic reticulum membrane. This is Reticulon-like protein B13 (RTNLB13) from Arabidopsis thaliana (Mouse-ear cress).